The chain runs to 468 residues: ATP synthase subunit beta (468 aa).

155–162 (GGAGVGKT) lines the ATP pocket.

Belongs to the ATPase alpha/beta chains family. F-type ATPases have 2 components, CF(1) - the catalytic core - and CF(0) - the membrane proton channel. CF(1) has five subunits: alpha(3), beta(3), gamma(1), delta(1), epsilon(1). CF(0) has three main subunits: a(1), b(2) and c(9-12). The alpha and beta chains form an alternating ring which encloses part of the gamma chain. CF(1) is attached to CF(0) by a central stalk formed by the gamma and epsilon chains, while a peripheral stalk is formed by the delta and b chains.

The protein resides in the cell membrane. The enzyme catalyses ATP + H2O + 4 H(+)(in) = ADP + phosphate + 5 H(+)(out). Produces ATP from ADP in the presence of a proton gradient across the membrane. The catalytic sites are hosted primarily by the beta subunits. This is ATP synthase subunit beta from Streptococcus sanguinis (strain SK36).